The following is a 178-amino-acid chain: Nicotinamide-nucleotide adenylyltransferase (178 aa).

It belongs to the archaeal NMN adenylyltransferase family.

It is found in the cytoplasm. It carries out the reaction beta-nicotinamide D-ribonucleotide + ATP + H(+) = diphosphate + NAD(+). Its pathway is cofactor biosynthesis; NAD(+) biosynthesis; NAD(+) from nicotinamide D-ribonucleotide: step 1/1. In Pyrobaculum neutrophilum (strain DSM 2338 / JCM 9278 / NBRC 100436 / V24Sta) (Thermoproteus neutrophilus), this protein is Nicotinamide-nucleotide adenylyltransferase.